Here is a 920-residue protein sequence, read N- to C-terminus: Translation initiation factor IF-2 (920 aa).

3 stretches are compositionally biased toward basic and acidic residues: residues 149–175, 186–197, and 255–265; these read EAEM…EKPV, AEKKATADKAAK, and AKPEGADDKKK. Disordered stretches follow at residues 149–197 and 245–319; these read EAEM…KAAK and EAKK…KQRQ. Gly residues predominate over residues 301–311; the sequence is SSGGVGGWRSG. The region spanning 418–585 is the tr-type G domain; it reads PRPPVVTVMG…NVLLQAEILE (168 aa). Residues 427 to 434 form a G1 region; the sequence is GHVDHGKT. 427 to 434 provides a ligand contact to GTP; it reads GHVDHGKT. A G2 region spans residues 452–456; it reads GITQH. The G3 stretch occupies residues 473–476; sequence DTPG. GTP is bound by residues 473 to 477 and 527 to 530; these read DTPGH and NKID. Residues 527–530 are G4; the sequence is NKID. The interval 563 to 565 is G5; the sequence is SAK.

This sequence belongs to the TRAFAC class translation factor GTPase superfamily. Classic translation factor GTPase family. IF-2 subfamily.

It is found in the cytoplasm. In terms of biological role, one of the essential components for the initiation of protein synthesis. Protects formylmethionyl-tRNA from spontaneous hydrolysis and promotes its binding to the 30S ribosomal subunits. Also involved in the hydrolysis of GTP during the formation of the 70S ribosomal complex. In Polynucleobacter asymbioticus (strain DSM 18221 / CIP 109841 / QLW-P1DMWA-1) (Polynucleobacter necessarius subsp. asymbioticus), this protein is Translation initiation factor IF-2.